The sequence spans 1732 residues: Serine/threonine-protein kinase MRCK alpha (1732 aa).

Residues 77–343 form the Protein kinase domain; it reads FEILKVIGRG…IEDFKKHPFF (267 aa). ATP is bound by residues 83–91 and Lys106; that span reads IGRGAFGEV. The Proton acceptor role is filled by Asp201. Residues Ser222 and Ser234 each carry the phosphoserine; by autocatalysis modification. Thr240 carries the post-translational modification Phosphothreonine; by autocatalysis. An AGC-kinase C-terminal domain is found at 344-414; it reads SGIDWDNIRN…TSSCVLSDRS (71 aa). 3 coiled-coil regions span residues 437 to 670, 713 to 820, and 880 to 943; these read NNLA…KQKQ, SEIK…WEAQ, and LELQ…SEKG. A disordered region spans residues 973–1002; sequence CTPAGKGRRIADSAPLPVHTPTLRKKGCPA. A Phorbol-ester/DAG-type zinc finger spans residues 1012–1062; it reads THQFFVKSFTAPTKCHQCTSLMVGLIRQGCSCEVCGFSCHITCVNKAPTTC. Residues 1082 to 1201 enclose the PH domain; sequence GTAYEGHVRI…WVGVLSELHK (120 aa). At Ser1127 the chain carries Phosphoserine. The 273-residue stretch at 1227-1499 folds into the CNH domain; it reads IKTTQAAAII…RPLNTEGSLN (273 aa). Ser1545 carries the post-translational modification Phosphoserine. Residues 1571-1584 form the CRIB domain; it reads ISNPTNFNHIAHMG. The interval 1592–1732 is disordered; sequence LKDLPMNPRP…ESTDRGSWDP (141 aa). Residues 1604-1619 show a composition bias toward polar residues; that stretch reads SRTVFSGSVSIPSITK. Ser1611, Ser1613, Ser1629, Ser1651, Ser1664, Ser1669, Ser1693, Ser1719, and Ser1721 each carry phosphoserine. Positions 1625–1640 are enriched in low complexity; the sequence is GRSMSASSGLSARSSA. Low complexity predominate over residues 1665–1674; sequence PSEGSLSSGG.

Belongs to the protein kinase superfamily. AGC Ser/Thr protein kinase family. DMPK subfamily. Homodimer and homotetramer via the coiled coil regions. Interacts tightly with GTP-bound but not GDP-bound CDC42. Forms a tripartite complex with MYO18A and LURAP1 with the latter acting as an adapter connecting CDC42BPA and MYO18A. LURAP1 binding results in activation of CDC42BPA by abolition of its negative autoregulation. Interacts with LURAP1. Interacts (via AGC-kinase C-terminal domain) with FAM89B/LRAP25 (via LRR repeat). Forms a tripartite complex with FAM89B/LRAP25 and LIMK1. It depends on Mg(2+) as a cofactor. Post-translationally, proteolytically cleaved by caspases upon apoptosis induction. The cleavage at Asp-478 by CASP3 increases its kinase activity (in vitro). Highly expressed in the brain and lung and present in lower levels in all other tissues tested.

The protein localises to the cytoplasm. The protein resides in the cell projection. It localises to the lamellipodium. The enzyme catalyses L-seryl-[protein] + ATP = O-phospho-L-seryl-[protein] + ADP + H(+). The catalysed reaction is L-threonyl-[protein] + ATP = O-phospho-L-threonyl-[protein] + ADP + H(+). With respect to regulation, maintained in an inactive, closed conformation by an interaction between the kinase domain and the negative autoregulatory C-terminal coiled-coil region. Agonist binding to the phorbol ester binding site disrupts this, releasing the kinase domain to allow N-terminus-mediated dimerization and kinase activation by transautophosphorylation. Inhibited by chelerythrine chloride. In terms of biological role, serine/threonine-protein kinase which is an important downstream effector of CDC42 and plays a role in the regulation of cytoskeleton reorganization and cell migration. Regulates actin cytoskeletal reorganization via phosphorylation of PPP1R12A and MYL9/MLC2. In concert with MYO18A and LURAP1, is involved in modulating lamellar actomyosin retrograde flow that is crucial to cell protrusion and migration. Phosphorylates: PPP1R12C, LIMK1 and LIMK2. May play a role in TFRC-mediated iron uptake. In concert with FAM89B/LRAP25 mediates the targeting of LIMK1 to the lamellipodium resulting in its activation and subsequent phosphorylation of CFL1 which is important for lamellipodial F-actin regulation. Triggers the formation of an extrusion apical actin ring required for epithelial extrusion of apoptotic cells. In Rattus norvegicus (Rat), this protein is Serine/threonine-protein kinase MRCK alpha.